A 412-amino-acid chain; its full sequence is Serine hydroxymethyltransferase (412 aa).

Residues Leu-117 and 121–123 each bind (6S)-5,6,7,8-tetrahydrofolate; that span reads GHL. Lys-226 is subject to N6-(pyridoxal phosphate)lysine.

The protein belongs to the SHMT family. Homodimer. Pyridoxal 5'-phosphate serves as cofactor.

Its subcellular location is the cytoplasm. It catalyses the reaction (6R)-5,10-methylene-5,6,7,8-tetrahydrofolate + glycine + H2O = (6S)-5,6,7,8-tetrahydrofolate + L-serine. The protein operates within one-carbon metabolism; tetrahydrofolate interconversion. Its pathway is amino-acid biosynthesis; glycine biosynthesis; glycine from L-serine: step 1/1. Catalyzes the reversible interconversion of serine and glycine with tetrahydrofolate (THF) serving as the one-carbon carrier. This reaction serves as the major source of one-carbon groups required for the biosynthesis of purines, thymidylate, methionine, and other important biomolecules. Also exhibits THF-independent aldolase activity toward beta-hydroxyamino acids, producing glycine and aldehydes, via a retro-aldol mechanism. The polypeptide is Serine hydroxymethyltransferase (Staphylococcus aureus (strain USA300)).